The sequence spans 350 residues: Probable dTDP-glucose 4,6-dehydratase (350 aa).

7–13 provides a ligand contact to NAD(+); the sequence is GGAGFIG. Thr132 contributes to the substrate binding site. Asp133 functions as the Proton donor in the catalytic mechanism. Residues Glu134 and Tyr157 each act as proton acceptor in the active site.

It belongs to the NAD(P)-dependent epimerase/dehydratase family. dTDP-glucose dehydratase subfamily. The cofactor is NAD(+).

The catalysed reaction is dTDP-alpha-D-glucose = dTDP-4-dehydro-6-deoxy-alpha-D-glucose + H2O. The protein operates within carbohydrate biosynthesis; dTDP-L-rhamnose biosynthesis. This is Probable dTDP-glucose 4,6-dehydratase from Sinorhizobium fredii (strain NBRC 101917 / NGR234).